The following is a 1035-amino-acid chain: Ephrin type-A receptor 6 (1035 aa).

Positions 1 to 22 (MGGCEVREFLLQFGFFLPLLTA) are cleaved as a signal peptide. Residues 23–549 (WTGDCSHVSN…MAAEQGQILV (527 aa)) lie on the Extracellular side of the membrane. Residues 33 to 211 (QVVLLDTTTV…FYKKCPFTVR (179 aa)) form the Eph LBD domain. Fibronectin type-III domains are found at residues 330–440 (PPSA…TDHD) and 441–536 (APSL…TGDE). Asn-342, Asn-396, and Asn-409 each carry an N-linked (GlcNAc...) asparagine glycan. A helical transmembrane segment spans residues 550–570 (IATAAVGGFTLLVILTLFFLI). Residues 571–1035 (TGRCQWYIKA…MHIQEKGFHV (465 aa)) are Cytoplasmic-facing. Phosphotyrosine; by autocatalysis occurs at positions 605 and 611. One can recognise a Protein kinase domain in the interval 630–943 (IRIERVIGAG…RNPSALHTLV (314 aa)). Residues 636 to 644 (IGAGEFGEV) and Lys-662 contribute to the ATP site. Asp-797 serves as the catalytic Proton acceptor. Phosphotyrosine; by autocatalysis is present on residues Tyr-830 and Tyr-977. Residues 960-1024 (PLFVTVGDWL…VSSIQTLRLH (65 aa)) enclose the SAM domain. A PDZ-binding motif is present at residues 1033–1035 (FHV).

Belongs to the protein kinase superfamily. Tyr protein kinase family. Ephrin receptor subfamily. In terms of assembly, heterotetramer upon binding of the ligand. The heterotetramer is composed of an ephrin dimer and a receptor dimer. Oligomerization is probably required to induce biological responses. Interacts (via SAM domain) with ANKS1A (via SAM domain).

The protein localises to the membrane. It catalyses the reaction L-tyrosyl-[protein] + ATP = O-phospho-L-tyrosyl-[protein] + ADP + H(+). Receptor tyrosine kinase which binds promiscuously GPI-anchored ephrin-A family ligands residing on adjacent cells, leading to contact-dependent bidirectional signaling into neighboring cells. The signaling pathway downstream of the receptor is referred to as forward signaling while the signaling pathway downstream of the ephrin ligand is referred to as reverse signaling. The polypeptide is Ephrin type-A receptor 6 (Epha6) (Mus musculus (Mouse)).